A 296-amino-acid chain; its full sequence is Ribosomal protein L11 methyltransferase (296 aa).

S-adenosyl-L-methionine-binding residues include T145, G166, D188, and N230.

This sequence belongs to the methyltransferase superfamily. PrmA family.

Its subcellular location is the cytoplasm. It carries out the reaction L-lysyl-[protein] + 3 S-adenosyl-L-methionine = N(6),N(6),N(6)-trimethyl-L-lysyl-[protein] + 3 S-adenosyl-L-homocysteine + 3 H(+). Its function is as follows. Methylates ribosomal protein L11. The polypeptide is Ribosomal protein L11 methyltransferase (Histophilus somni (strain 129Pt) (Haemophilus somnus)).